A 305-amino-acid chain; its full sequence is Protein hrde-2 (305 aa).

Disordered regions lie at residues 211–233 and 267–305; these read AEMV…PVPA and EMSN…EYCQ. The span at 215-227 shows a compositional bias: polar residues; that stretch reads PSNTTGSSGSPMS. Acidic residues predominate over residues 268–287; it reads MSNDEYSPDESENDENEYDY. Over residues 289–305 the composition is skewed to basic and acidic residues; the sequence is NAARYDDGYDEGHEYCQ.

Expressed throughout the male and female germline.

The protein resides in the nucleus. Plays a role in germline RNA interference (RNAi), and in particular is required for piwi-interacting RNA (piRNA) gene silencing. Facilitates the binding of the argonaut protein hrde-1 to small interfering RNAs (siRNAs) targets that are required for transgenerational epigenetic inheritance and germline immortality. The chain is Protein hrde-2 from Caenorhabditis elegans.